A 182-amino-acid polypeptide reads, in one-letter code: Transcription termination/antitermination protein NusG (182 aa).

Residues Gly131–Ser161 form the KOW domain.

The protein belongs to the NusG family.

Functionally, participates in transcription elongation, termination and antitermination. In Vibrio cholerae serotype O1 (strain ATCC 39315 / El Tor Inaba N16961), this protein is Transcription termination/antitermination protein NusG.